A 2167-amino-acid polypeptide reads, in one-letter code: MTHSPATSEDEERHSASECPEGGSESDSSPDGPGRGPQGTRGRGSGAPGNLASTRGLQGRSMSVPDDAHFSMMVFRIGIPDLHQTKCLRFNPDATIWTAKQQVLCALSESLQDVLNYGLFQPATSGRDANFLEEERLLREYPQSFEKGVPYLEFRYKTRVYKQTNLDEKQLAKLHTKTGLKKFLEYVQLGTSDKVARLLDKGLDPNYHDSDSGETPLTLAAQTEGSVEVIRTLCLGGAHIDFRARDGMTALHKAACARHCLALTALLDLGGSPNYKDRRGLTPLFHTAMVGGDPRCCELLLYNRAQLGIADENGWQEIHQACQRGHSQHLEHLLFYGAEPGAQNASGNTALHICALYNKETCARILLYRGANKDVKNNNGQTPFQVAVIAGNFELGELIRNHREQDVVPFQESPKYAARRRGPPGAGLTVPPALLRANSDTSMALPDWMVFSAPGASSSGTPGPTSGPQGQSQPSAPSTKLSSGTLRSASSPRGARARSPSRGRHPEDAKRQPRGRPSSSGTPRDGPAGGTGGSGGPGGSLGSRGRRRKLYSAVPGRSFMAVKSYQAQGEGEISLSKGEKIKVLSIGEGGFWEGQVKGRVGWFPSDCLEEVANRSQEGRQESRSDKAKRLFRHYTVGSYDSFDAPSLIDGIDSGSDYIIKEKTVLLQKKDSEGFGFVLRGAKAQTPIEEFTPTPAFPALQYLESVDEGGVAWRAGLRMGDFLIEVNGQNVVKVGHRQVVNMIRQGGNTLMVKVVMVTRHPDMDEAVHKKASQQAKRLPPPAISLRSKSMTSELEEMVSPWKKKIEYEQQPAAVPSMEKKRTVYQMALNKLDEILAAAQQTISASESPGPGGLASLGKHRPKGFFATESSFDPHHRSQPSYDRPSFLPPGPGLMLRQKSIGAAEDDRPYLAPPAMKFSRSLSVPGSEDIPPPPTTSPPEPPYSTPPAPSSSGRLTPSPRGGPFNPSSGGPLPASSPSSFDGPSPPDTRGGGREKSLYHSAALPPAHHHPPHHHHHHAPPPQPHHHHAHPPHPPEMETGGSPDDPPPRLALGPQPSLRGWRGGGPSPTSGAPSPSHHSSSGGSSGPTQAPALRYFQLPPRAASAAMYVPARSGRGRKGPLVKQTKVEGEPQKGSIPSASSPTSPALPRSEPPPAGPSEKNSIPIPTIIIKAPSTSSSGRSSQGSSTEAEPPTQPDGAGGGGSSPSPAPATSPVPPSPSPVPTPASPSGPATLDFTSQFGAALVGAARREGGWQNEARRRSTLFLSTDAGDEDGGDSGLGPGGPPGPRLRHSKSIDEGMFSAEPYLRLESGGSSGGYGAYAAGSRAYGGSGSSSAFTSFLPPRPLVHPLTGKALDPASPLGLALAARERALKESSEGGGTPQPPPRPPSPRYDAPPPTLHHHSPHSPHSPHARHEPVLRLWGDPARRELGYRAGLGSQEKALTASPPAARRSLLHRLPPTAPGVGPLLLQLGPEPPTPHPGVSKAWRTAAPEEPERLPLHVRFLENCQARPPPAGTRGSSTEDGPGVPPPSPRRVLPTSPTSPRGNEENGLPLLVLPPPAPSVDVDDGEFLFAEPLPPPLEFSNSFEKPESPLTPGPPHPLPDPPSPATPLPAAPPPAVAAAPPTLDSTASSLTSYDSEVATLTQGAPAAPGDPPAPGPPAPAAPAPPAPQPGPDPPPGTDSGIEEVDSRSSSDHPLETISSASTLSSLSAEGGGNTGGVAGGGAGVASGTELLDTYVAYLDGQAFGGSGTPGPPYPPQLMTPSKLRGRALGTSGNLRPGPSGGLRDPVTPTSPTVSVTGAGTDGLLALSACPGPSTAGVAGGPVAVEPEVPPVPLPAASSLPRKLLPWEEGPGPPPPPLPGPLSQPQASALATVKASIISELSSKLQQFGGSSTAGGALPWARGGSGGSTDSHHGGASYIPERTSSLQRQRLSEDSQTSLLSKPSSSIFQNWPKPPLPPLPTGSGVSSSTAAAPGATSPSASSASASTRHLQGVEFEMRPPLLRRAPSPSLLPASDHKVSPAPRPSSLPILPSGPIYPGLFDIRSSPTGGAGGSTDPFAPVFVPPHPGISGGLGGALSGASRSLSPTRLLSLPPDKPFGAKPLGFWTKFDVADWLEWLGLSEHRAQFLDHEIDGSHLPALTKEDYVDLGVTRVGHRMNIDRALKFFLER.

Residues 1 to 63 (MTHSPATSED…TRGLQGRSMS (63 aa)) form a disordered region. Low complexity predominate over residues 17–32 (SECPEGGSESDSSPDG). Gly residues predominate over residues 33-47 (PGRGPQGTRGRGSGA). The residue at position 43 (arginine 43) is an Omega-N-methylarginine. Tyrosine 186 is subject to Phosphotyrosine. ANK repeat units follow at residues 195–210 (VARLLDKGLDPNYHDS), 212–245 (SGETPLTLAAQTEGSVEVIRTLCLGGAHIDFRAR), 246–278 (DGMTALHKAACARHCLALTALLDLGGSPNYKDR), 279–312 (RGLTPLFHTAMVGGDPRCCELLLYNRAQLGIADE), 313–345 (NGWQEIHQACQRGHSQHLEHLLFYGAEPGAQNA), 346–378 (SGNTALHICALYNKETCARILLYRGANKDVKNN), and 379–395 (NGQTPFQVAVIAGNFEL). Disordered regions lie at residues 413–432 (SPKYAARRRGPPGAGLTVPP) and 453–546 (APGA…SRGR). Positions 453–479 (APGASSSGTPGPTSGPQGQSQPSAPST) are enriched in low complexity. Residues 527 to 542 (PAGGTGGSGGPGGSLG) show a composition bias toward gly residues. Serine 540 is modified (phosphoserine). Arginine 544 bears the Omega-N-methylarginine mark. One can recognise an SH3 domain in the interval 554-613 (VPGRSFMAVKSYQAQGEGEISLSKGEKIKVLSIGEGGFWEGQVKGRVGWFPSDCLEEVAN). 4 positions are modified to phosphoserine: serine 638, serine 641, serine 671, and serine 791. In terms of domain architecture, PDZ spans 663–757 (TVLLQKKDSE…TLMVKVVMVT (95 aa)). Positions 841-894 (ISASESPGPGGLASLGKHRPKGFFATESSFDPHHRSQPSYDRPSFLPPGPGLML) are disordered. Serine 898 is modified (phosphoserine). Disordered regions lie at residues 917–1233 (SRSL…LDFT), 1245–1294 (RREG…SIDE), 1308–1417 (GGSS…VLRL), 1429–1725 (RAGL…AGVA), 1740–1787 (GQAF…DPVT), 1842–1866 (KLLPWEEGPGPPPPPLPGPLSQPQA), 1898–1988 (PWAR…STRH), and 2002–2029 (RRAPSPSLLPASDHKVSPAPRPSSLPIL). Pro residues predominate over residues 928-947 (IPPPPTTSPPEPPYSTPPAP). Residue arginine 958 is modified to Omega-N-methylarginine. The segment covering 964 to 980 (PSSGGPLPASSPSSFDG) has biased composition (low complexity). Residues 1004–1028 (AHHHPPHHHHHHAPPPQPHHHHAHP) show a composition bias toward basic residues. Omega-N-methylarginine is present on arginine 1059. Low complexity predominate over residues 1064 to 1085 (SPTSGAPSPSHHSSSGGSSGPT). An omega-N-methylarginine mark is found at arginine 1098 and arginine 1109. Low complexity-rich tracts occupy residues 1132–1146 (SIPSASSPTSPALPR) and 1171–1184 (STSSSGRSSQGSST). Over residues 1203–1224 (SPAPATSPVPPSPSPVPTPASP) the composition is skewed to pro residues. The segment covering 1245-1256 (RREGGWQNEARR) has biased composition (basic and acidic residues). Arginine 1257 bears the Asymmetric dimethylarginine mark. Serine 1291 bears the Phosphoserine mark. Residues 1363 to 1372 (ARERALKESS) are compositionally biased toward basic and acidic residues. Over residues 1378 to 1395 (PQPPPRPPSPRYDAPPPT) the composition is skewed to pro residues. The span at 1396–1408 (LHHHSPHSPHSPH) shows a compositional bias: basic residues. The residue at position 1429 (arginine 1429) is an Omega-N-methylarginine. Serine 1442 bears the Phosphoserine mark. Low complexity-rich tracts occupy residues 1459-1469 (PGVGPLLLQLG) and 1530-1541 (RRVLPTSPTSPR). The span at 1589 to 1615 (PLTPGPPHPLPDPPSPATPLPAAPPPA) shows a compositional bias: pro residues. Polar residues predominate over residues 1624-1641 (DSTASSLTSYDSEVATLT). Residues 1648 to 1676 (PGDPPAPGPPAPAAPAPPAPQPGPDPPPG) show a composition bias toward pro residues. Over residues 1684-1694 (VDSRSSSDHPL) the composition is skewed to basic and acidic residues. Residues 1695 to 1708 (ETISSASTLSSLSA) are compositionally biased toward low complexity. Gly residues predominate over residues 1709 to 1724 (EGGGNTGGVAGGGAGV). Over residues 1850–1861 (PGPPPPPLPGPL) the composition is skewed to pro residues. Arginine 1901 is subject to Omega-N-methylarginine. Composition is skewed to low complexity over residues 1934 to 1945 (SQTSLLSKPSSS), 1960 to 1985 (TGSGVSSSTAAAPGATSPSASSASAS), and 2002 to 2012 (RRAPSPSLLPA). Omega-N-methylarginine is present on residues arginine 2022, arginine 2042, and arginine 2080. Residues 2104–2167 (WTKFDVADWL…DRALKFFLER (64 aa)) form the SAM domain.

Belongs to the SHANK family. May homomultimerize via its SAM domain. Interacts with the C-terminus of SSTR2 via the PDZ domain. Interacts with SHARPIN, SPTAN1 and DLGAP1/GKAP. Part of a complex with DLG4/PSD-95 and DLGAP1/GKAP. Interacts with BAIAP2. Interacts with IGSF9. Interacts with HOMER1 and HOMER3. In terms of tissue distribution, expressed only in brain (neuropil of cortex, CA1 region hippocampus and molecular layer of cerebellum).

The protein resides in the cytoplasm. It is found in the synapse. Its subcellular location is the postsynaptic density. Its function is as follows. Seems to be an adapter protein in the postsynaptic density (PSD) of excitatory synapses that interconnects receptors of the postsynaptic membrane including NMDA-type and metabotropic glutamate receptors, and the actin-based cytoskeleton. Plays a role in the structural and functional organization of the dendritic spine and synaptic junction. Overexpression promotes maturation of dendritic spines and the enlargement of spine heads via its ability to recruit Homer to postsynaptic sites, and enhances presynaptic function. The chain is SH3 and multiple ankyrin repeat domains protein 1 (Shank1) from Rattus norvegicus (Rat).